The chain runs to 440 residues: D-serine dehydratase (440 aa).

At K116 the chain carries N6-(pyridoxal phosphate)lysine.

Belongs to the serine/threonine dehydratase family. DsdA subfamily. As to quaternary structure, monomer. The cofactor is pyridoxal 5'-phosphate.

The enzyme catalyses D-serine = pyruvate + NH4(+). The polypeptide is D-serine dehydratase (Salmonella typhi).